A 418-amino-acid polypeptide reads, in one-letter code: Serine--tRNA ligase (418 aa).

L-serine is bound at residue 232–234 (TAE). ATP contacts are provided by residues 263–265 (RRE) and valine 279. Glutamate 286 provides a ligand contact to L-serine. Position 350–353 (350–353 (EISS)) interacts with ATP. Residue serine 385 coordinates L-serine.

It belongs to the class-II aminoacyl-tRNA synthetase family. Type-1 seryl-tRNA synthetase subfamily. As to quaternary structure, homodimer. The tRNA molecule binds across the dimer.

Its subcellular location is the cytoplasm. It catalyses the reaction tRNA(Ser) + L-serine + ATP = L-seryl-tRNA(Ser) + AMP + diphosphate + H(+). The enzyme catalyses tRNA(Sec) + L-serine + ATP = L-seryl-tRNA(Sec) + AMP + diphosphate + H(+). Its pathway is aminoacyl-tRNA biosynthesis; selenocysteinyl-tRNA(Sec) biosynthesis; L-seryl-tRNA(Sec) from L-serine and tRNA(Sec): step 1/1. Functionally, catalyzes the attachment of serine to tRNA(Ser). Is also able to aminoacylate tRNA(Sec) with serine, to form the misacylated tRNA L-seryl-tRNA(Sec), which will be further converted into selenocysteinyl-tRNA(Sec). In Leptospira biflexa serovar Patoc (strain Patoc 1 / Ames), this protein is Serine--tRNA ligase.